A 472-amino-acid polypeptide reads, in one-letter code: Adenosylhomocysteinase (472 aa).

3 residues coordinate substrate: Thr-64, Asp-138, and Glu-198. An NAD(+)-binding site is contributed by 199-201 (TTT). Residues Lys-228 and Asp-232 each contribute to the substrate site. Residues Asn-233, 262-267 (GFGDVG), Glu-285, Asn-320, 341-343 (IGH), and Asn-386 each bind NAD(+).

It belongs to the adenosylhomocysteinase family. Requires NAD(+) as cofactor.

It is found in the cytoplasm. The catalysed reaction is S-adenosyl-L-homocysteine + H2O = L-homocysteine + adenosine. Its pathway is amino-acid biosynthesis; L-homocysteine biosynthesis; L-homocysteine from S-adenosyl-L-homocysteine: step 1/1. Functionally, may play a key role in the regulation of the intracellular concentration of adenosylhomocysteine. The polypeptide is Adenosylhomocysteinase (Prochlorococcus marinus (strain MIT 9215)).